The sequence spans 14507 residues: Mucin-16 (14507 aa).

The span at 1-17 (MLKPSGLPGSSSPTRSL) shows a compositional bias: low complexity. The tract at residues 1–138 (MLKPSGLPGS…PRTRTSSTEG (138 aa)) is disordered. Residues 1–14451 (MLKPSGLPGS…EPLTGNSDLP (14451 aa)) are Extracellular-facing. Polar residues-rich tracts occupy residues 35-46 (TGATLSPKTSTG) and 56-138 (PFTS…STEG). N-linked (GlcNAc...) asparagine glycosylation is present at Asn-139. Disordered stretches follow at residues 160–180 (EKYT…ETPW), 198–229 (DSTA…TNPS), 265–287 (FSSP…LSSS), 396–554 (LGGT…STSV), 655–674 (VSKT…SYTM), 695–719 (SLGL…GHTK), and 740–888 (TSTF…RTTL). Positions 166–178 (TETSTTEGDSTET) are enriched in low complexity. A compositionally biased stretch (polar residues) spans 212–229 (PAETTVTDSHTPGRTNPS). 2 stretches are compositionally biased toward low complexity: residues 276-287 (SRISTSAPLSSS) and 396-413 (LGGT…STTL). Polar residues-rich tracts occupy residues 414-423 (VSEETNTHHS), 431-441 (GTLNTSMTPLE), and 460-478 (GFTT…SSSH). A glycan (N-linked (GlcNAc...) asparagine) is linked at Asn-434. Composition is skewed to low complexity over residues 485 to 497 (TTGS…SSST) and 508 to 525 (ATTS…ESTA). Over residues 526–543 (QQFSEPQHTQWVETSPSM) the composition is skewed to polar residues. Composition is skewed to polar residues over residues 696–706 (LGLTPLNTRHP), 740–780 (TSTF…NAAT), 787–796 (NATSPLTHPS), and 805–821 (SVLT…SPNI). The N-linked (GlcNAc...) asparagine glycan is linked to Asn-787. Over residues 823 to 846 (PTGTLTSESSESPSTLSLPSVSGV) the composition is skewed to low complexity. Composition is skewed to polar residues over residues 847–860 (KTTF…THLF) and 869–888 (TSNP…RTTL). Asn-930 and Asn-957 each carry an N-linked (GlcNAc...) asparagine glycan. Polar residues-rich tracts occupy residues 949–969 (SQTN…TWPE), 1092–1101 (GSSTPGRTSQ), 1124–1137 (GTSS…TATH), and 1301–1317 (SGSS…NTGS). 6 disordered regions span residues 949–981 (SQTN…LPSA), 1082–1101 (VSPS…RTSQ), 1121–1149 (PRDG…ARST), 1301–1378 (SGSS…NLTS), 1593–1641 (LGTQ…SSSS), and 1704–1757 (LSES…SPTT). Residues 1318–1328 (TWDPTTYITTT) are compositionally biased toward low complexity. Composition is skewed to polar residues over residues 1334-1347 (SSAQ…VRTL), 1368-1378 (PKISSSPNLTS), 1596-1613 (QGRS…STDT), 1621-1633 (GPTN…PMDN), and 1704-1745 (LSES…GSQM). The N-linked (GlcNAc...) asparagine glycan is linked to Asn-1375. Asn-1633 carries an N-linked (GlcNAc...) asparagine glycan. A compositionally biased stretch (low complexity) spans 1746–1757 (STSIPLTSSPTT). N-linked (GlcNAc...) asparagine glycosylation is found at Asn-1840, Asn-1877, and Asn-1890. The segment covering 1846 to 1908 (DLSHGVHTSS…TEKSEVSSSI (63 aa)) has biased composition (polar residues). Disordered regions lie at residues 1846–1930 (DLSH…PGNR), 2010–2033 (VSAS…YSSA), 2064–2140 (WPST…GASI), and 2153–2177 (RSDV…SAGT). Composition is skewed to low complexity over residues 2019–2033 (SVSS…YSSA) and 2064–2085 (WPST…NPSS). Over residues 2111–2132 (HGPQNTAASTLNTDASSVTGLS) the composition is skewed to polar residues. N-linked (GlcNAc...) asparagine glycosylation is found at Asn-2345 and Asn-2375. Disordered regions lie at residues 2393-2455 (PTSI…PFTI) and 2566-2591 (SESK…ETSA). 2 stretches are compositionally biased toward low complexity: residues 2417-2429 (TSTT…TSPS) and 2566-2583 (SESK…TPTS). Residue Asn-2737 is glycosylated (N-linked (GlcNAc...) asparagine). Disordered regions lie at residues 2789–2822 (TTGS…LTMN), 2838–2885 (TATQ…TWGI), 2901–3006 (DTKS…AMTS), 3019–3052 (TGQA…TSRK), 3083–3148 (TLNM…ASSI), 3172–3235 (SQAA…PETT), 3251–3276 (ALGS…PTEN), 3299–3392 (GTPG…KTET), 3415–3436 (TSRS…TSGS), and 3462–3491 (VSLP…VTSP). Residues 2803–2819 (SGSTHSTGTKTFSSLPL) show a composition bias toward polar residues. A compositionally biased stretch (low complexity) spans 2864–2875 (SASSSPSKAFAS). Composition is skewed to polar residues over residues 2876–2885 (LTTAPPTWGI) and 2901–2918 (DTKS…NTIP). Over residues 2919-2931 (DSDASTASSSLSK) the composition is skewed to low complexity. The segment covering 2942 to 2968 (MTSTKAISASSFQSTGFTETPEGSASP) has biased composition (polar residues). The span at 3019 to 3035 (TGQAARSGSSSSPISLS) shows a compositional bias: low complexity. Over residues 3041–3052 (SFLSPTASTSRK) the composition is skewed to polar residues. The N-linked (GlcNAc...) asparagine glycan is linked to Asn-3085. Residues 3107-3116 (TAETQTLTFT) show a composition bias toward low complexity. Composition is skewed to polar residues over residues 3117–3132 (PSET…SPTE) and 3172–3181 (SQAAQGNSTW). The N-linked (GlcNAc...) asparagine glycan is linked to Asn-3178. Positions 3188–3200 (TGSSPAGTSPGSP) are enriched in low complexity. 2 stretches are compositionally biased toward polar residues: residues 3201–3214 (EMST…SKEP) and 3251–3261 (ALGSGSTSISH). The segment covering 3263–3274 (PTGTTSPTKSPT) has biased composition (low complexity). Composition is skewed to polar residues over residues 3299–3342 (GTPG…TTGM) and 3360–3383 (VSLS…SSLT). Composition is skewed to low complexity over residues 3424 to 3436 (SSTS…TSGS) and 3477 to 3491 (PSGG…VTSP). An N-linked (GlcNAc...) asparagine glycan is attached at Asn-3501. The span at 3538-3555 (ISTTITTMGTNSISTTTP) shows a compositional bias: low complexity. Disordered stretches follow at residues 3538–3588 (ISTT…STAA), 3644–3672 (TPSS…TAST), 3794–3829 (RSSG…GQVP), 3843–3879 (AKTP…TPSA), 3914–3982 (LESG…SPVV), 4024–4056 (MDTS…SSKR), 4094–4121 (AMQT…WTGT), and 4138–4166 (FSKG…VPIH). Polar residues-rich tracts occupy residues 3812–3824 (QTST…TSAH) and 3848–3868 (ATFQ…TSDS). Over residues 3916–3927 (SGTTSSPSWKSS) the composition is skewed to low complexity. Polar residues predominate over residues 3946-3982 (PSTNTVETTGWVTSSEHASHSTIPAHSASSKLTSPVV). Residues 4026–4041 (TSSTTQTSIISSPGST) are compositionally biased toward low complexity. Over residues 4095-4121 (MQTSPPGATSLSAPTLDTSATASWTGT) the composition is skewed to polar residues. Residues 4152-4164 (SVEETSSSSSLVP) show a composition bias toward low complexity. N-linked (GlcNAc...) asparagine glycans are attached at residues Asn-4220, Asn-4498, Asn-4606, Asn-4613, and Asn-4624. 3 disordered regions span residues 4728–4748 (VKDV…PSSQ), 4845–4961 (HSTV…TRLS), and 5026–5066 (VSWT…KLSS). The span at 4856–4876 (KVTSPNVTTSTMEDTTISRSI) shows a compositional bias: polar residues. Asn-4861 is a glycosylation site (N-linked (GlcNAc...) asparagine). Composition is skewed to low complexity over residues 4877–4914 (PKSS…ETST) and 4924–4939 (TTEV…SSTS). Polar residues-rich tracts occupy residues 4944–4961 (DQST…TRLS) and 5026–5037 (VSWTSPPSVDKT). Residues 5038-5047 (SSPSSFLSSP) are compositionally biased toward low complexity. Residues 5048–5059 (AMTTPSLISSTL) show a composition bias toward polar residues. N-linked (GlcNAc...) asparagine glycans are attached at residues Asn-5096, Asn-5131, and Asn-5228. Disordered regions lie at residues 5128 to 5149 (VKAN…ETPK), 5221 to 5249 (EVSS…DTFT), and 5271 to 5303 (TQAS…TVTQ). The segment covering 5221–5234 (EVSSTGVNSSSKIS) has biased composition (polar residues). Low complexity predominate over residues 5280-5293 (SHSTLPLDTSTTLS). Residues 5294–5303 (QGGTHSTVTQ) show a composition bias toward polar residues. Residue Asn-5320 is glycosylated (N-linked (GlcNAc...) asparagine). Disordered stretches follow at residues 5328-5365 (PVEE…PLPV), 5381-5400 (GTTS…SITH), 5426-5507 (NVGT…TNTA), 5519-5538 (ASRT…DRPT), 5624-5654 (PVEE…ESIP), 5675-5696 (LGTT…PTQE), and 5727-5747 (ISGH…KATS). Composition is skewed to low complexity over residues 5333–5365 (SSVS…PLPV) and 5381–5393 (GTTS…SSPP). Residue Asn-5394 is glycosylated (N-linked (GlcNAc...) asparagine). 2 stretches are compositionally biased toward polar residues: residues 5426–5441 (NVGT…SSVL) and 5447–5485 (SKAT…TASL). Asn-5470 carries an N-linked (GlcNAc...) asparagine glycan. 4 stretches are compositionally biased toward low complexity: residues 5495 to 5504 (SEKTSSTTET), 5520 to 5532 (SRTE…TSIS), 5633 to 5654 (SLMS…ESIP), and 5675 to 5688 (LGTT…SSPP). An N-linked (GlcNAc...) asparagine glycan is attached at Asn-5689. Positions 5727-5737 (ISGHESQSSVP) are enriched in polar residues. Asn-5863 carries an N-linked (GlcNAc...) asparagine glycan. Disordered stretches follow at residues 5882–5931 (STAS…SSPV) and 6054–6078 (STST…TPEL). The span at 5903-5916 (TTTMSRSTKGVSWQ) shows a compositional bias: polar residues. Over residues 5917-5928 (SPPSVEETSSPS) the composition is skewed to low complexity. The segment covering 6054 to 6063 (STSTPGSPET) has biased composition (polar residues). The N-linked (GlcNAc...) asparagine glycan is linked to Asn-6088. Disordered regions lie at residues 6122-6149 (PASA…PLTI), 6219-6251 (NSLS…LVSV), 6399-6425 (SRTE…DTST), 6438-6459 (TKSE…SQGT), 6497-6545 (ISGT…TSLP), and 6682-6714 (TTGA…PDIS). Low complexity-rich tracts occupy residues 6134–6149 (SPEA…PLTI), 6226–6251 (PLLV…LVSV), and 6399–6410 (SRTELTSSSRTS). 2 stretches are compositionally biased toward polar residues: residues 6411–6425 (IQGT…DTST) and 6445–6459 (IATQ…SQGT). Low complexity predominate over residues 6500–6523 (TSPPSVEKTSSSSSLLSLPAITSP). 2 stretches are compositionally biased toward polar residues: residues 6530-6545 (LPES…TSLP) and 6683-6699 (TGAT…SRRT). Residue Asn-6732 is glycosylated (N-linked (GlcNAc...) asparagine). Disordered regions lie at residues 6800-6822 (SFSS…TLPK), 6845-6865 (TLGT…STSH), and 6886-6939 (TAAT…SETT). The span at 6848-6864 (TSPEPTTSSPPNLSSTS) shows a compositional bias: low complexity. N-linked (GlcNAc...) asparagine glycosylation occurs at Asn-6859. Residues 6886–6905 (TAATNVETTSSGHGSQSSVL) show a composition bias toward polar residues. The segment covering 6919–6938 (TTSTMGHTTVSTSMSVSSET) has biased composition (low complexity). The N-linked (GlcNAc...) asparagine glycan is linked to Asn-6961. Disordered regions lie at residues 6981–7004 (AEVS…QSTV), 7028–7107 (MTIP…ATTS), 7143–7208 (TSPE…TSKA), 7279–7302 (SRTE…MLPE), 7320–7345 (ESSE…TLDT), 7360–7427 (QRLP…SLLT), 7437–7456 (LDAS…STSV), 7463–7503 (EVTT…ETTK), 7527–7553 (SNTR…SEET), 7577–7597 (TEAI…TMSQ), 7726–7782 (ATTT…TTSS), 7825–7849 (LASS…TKMS), 7908–7927 (HTSP…TSST), and 7970–8000 (PSFS…SPLP). The span at 7028 to 7038 (MTIPTQTGPSG) shows a compositional bias: polar residues. The span at 7039–7055 (STSQDTLTLDTSTTKSQ) shows a compositional bias: low complexity. Polar residues predominate over residues 7057–7075 (KTHSTLTQRFPHSEMTTLM). A compositionally biased stretch (low complexity) spans 7086–7105 (SSPSLENPSSLPSLLSLPAT). Over residues 7166–7200 (GKDTTNTEAVHPSTNTAASNVEIPSSGHESPSSAL) the composition is skewed to polar residues. Over residues 7279–7298 (SRTEVTSSSRTSISGSAEST) the composition is skewed to low complexity. Polar residues-rich tracts occupy residues 7322 to 7345 (SEMT…TLDT), 7360 to 7371 (QRLPHSEITTLV), and 7390 to 7402 (SPPS…SAMI). Low complexity-rich tracts occupy residues 7403-7427 (SPSP…SLLT) and 7439-7455 (ASAE…SSTS). The span at 7474 to 7484 (FSNTAVTKVGT) shows a compositional bias: polar residues. Residues 7485-7494 (SSSGHESPSS) show a composition bias toward low complexity. The span at 7733-7749 (GTSTEPGTSSSSSLSTT) shows a compositional bias: low complexity. Positions 7750–7765 (SHERLTTYKDTAHTEA) are enriched in basic and acidic residues. The segment covering 7768–7782 (PSTNTGGTNVATTSS) has biased composition (polar residues). Low complexity-rich tracts occupy residues 7835–7846 (ESSGSEGTSSGT), 7915–7927 (TTQG…TSST), and 7973–8000 (SLMS…SPLP). Asn-8029 and Asn-8055 each carry an N-linked (GlcNAc...) asparagine glycan. Disordered regions lie at residues 8042-8078 (EVTT…LADS), 8111-8134 (IQTE…GTSL), 8312-8331 (GISR…TSHE), 8342-8389 (TEDM…YTMG), 8411-8472 (TSSL…ISPD), 8604-8624 (MLRT…STSA), 8674-8741 (SPMA…TKVS), and 8775-8880 (TPLT…HSSP). The span at 8052 to 8078 (PSSNRTVTDVGTSSSGHESTSFVLADS) shows a compositional bias: polar residues. The span at 8319 to 8328 (TSSTSNLSST) shows a compositional bias: low complexity. A glycan (N-linked (GlcNAc...) asparagine) is linked at Asn-8324. Positions 8345–8389 (MQPSTHTAVTNVRTSISGHESQSSVLSDSETPKATSPMGTTYTMG) are enriched in polar residues. Over residues 8607–8624 (TSSEPETSSPPNLSSTSA) the composition is skewed to low complexity. N-linked (GlcNAc...) asparagine glycosylation is found at Asn-8618 and Asn-8684. Composition is skewed to polar residues over residues 8674–8740 (SPMA…TTKV) and 8781–8810 (GSAE…SSRA). A compositionally biased stretch (low complexity) spans 8850–8880 (TSPPSSLVSLSAVTSPSPLYSTPSESSHSSP). Residue Asn-8913 is glycosylated (N-linked (GlcNAc...) asparagine). 2 disordered regions span residues 8995-9018 (ESTS…SATK) and 9147-9168 (SLSS…DSIH). An N-linked (GlcNAc...) asparagine glycan is attached at Asn-9202. The span at 9294-9307 (SISEETSSATEKST) shows a compositional bias: low complexity. Residues 9294-9460 (SISEETSSAT…TPSGSSHSSP (167 aa)) form a disordered region. 2 stretches are compositionally biased toward polar residues: residues 9308-9357 (VLSS…STPL) and 9374-9412 (SGAT…TTPM). The span at 9431 to 9460 (SPPSSLVSSSSVTSPSPLYSTPSGSSHSSP) shows a compositional bias: low complexity. N-linked (GlcNAc...) asparagine glycosylation occurs at Asn-9493. Disordered regions lie at residues 9611–9635 (ATPE…AQST), 9726–9753 (SSSS…SPSS), 9771–9791 (VLDT…STSV), and 9869–9890 (TEPT…ETTS). Residues 9621–9635 (MPSSRTSIPGPAQST) are compositionally biased toward polar residues. Composition is skewed to low complexity over residues 9774–9790 (TSSE…SSTS) and 9881–9890 (ETSTSEETTS). The N-linked (GlcNAc...) asparagine glycan is linked to Asn-9785. N-linked (GlcNAc...) asparagine glycans are attached at residues Asn-10075 and Asn-10173. Disordered regions lie at residues 10175 to 10218 (SLDT…PPAS) and 10445 to 10469 (TIRP…TGGT). Residues 10178 to 10193 (TSSVTPTNTPSSPGST) show a composition bias toward low complexity. A compositionally biased stretch (polar residues) spans 10194-10212 (HLLQSSKTDFTSSAKTSSP). A glycan (N-linked (GlcNAc...) asparagine) is linked at Asn-10510. Positions 10544–10573 (SLGAETSTALPRTTPSVFNRESETTASLVS) are enriched in polar residues. Disordered stretches follow at residues 10544 to 10590 (SLGA…DVSS) and 10689 to 10719 (ETSS…PGAE). N-linked (GlcNAc...) asparagine glycosylation occurs at Asn-10700. The span at 10708 to 10719 (ATPSIATSPGAE) shows a compositional bias: polar residues. Residue Asn-10749 is glycosylated (N-linked (GlcNAc...) asparagine). Over residues 10849–10860 (TTPSMTTSHGAE) the composition is skewed to polar residues. 3 disordered regions span residues 10849–10872 (TTPS…TVST), 10898–10926 (LSPG…TPTV), and 11003–11036 (LPTL…TVSP). Residues 10861 to 10872 (SSSAVPTPTVST) are compositionally biased toward low complexity. The segment covering 11003–11018 (LPTLTLSPGEPETTPS) has biased composition (low complexity). The N-linked (GlcNAc...) asparagine glycan is linked to Asn-11053. The interval 11072–11092 (SMATSHGAEASSAVPTPTVSP) is disordered. N-linked (GlcNAc...) asparagine glycosylation is found at Asn-11224 and Asn-11263. 2 stretches are compositionally biased toward polar residues: residues 11269–11284 (HPAE…TSRF) and 11358–11381 (STTV…SIAT). Disordered stretches follow at residues 11269 to 11301 (HPAE…SPEA), 11358 to 11400 (STTV…SPDV), 11508 to 11537 (KFSH…STTT), 11583 to 11724 (ETST…TSPR), 11836 to 11861 (SPTA…TSTM), and 11913 to 11937 (QTVT…FSRT). N-linked (GlcNAc...) asparagine glycosylation is present at Asn-11367. 3 stretches are compositionally biased toward polar residues: residues 11583-11594 (ETSTTVSGTIPN), 11631-11651 (VTSQ…TLTP), and 11658-11672 (TTAS…QTGF). The N-linked (GlcNAc...) asparagine glycan is linked to Asn-11594. Positions 11700–11717 (PVSRTTSSFSHSSPDATP) are enriched in low complexity. Polar residues-rich tracts occupy residues 11849–11861 (PLST…TSTM) and 11913–11928 (QTVT…SVTS). Repeat copies occupy residues 12067 to 12223 (AATV…PSPT), 12224 to 12381 (TAGP…PTIM), 12382 to 12537 (AAGP…PSPA), 12538 to 12692 (TAGP…PSPT), 12693 to 12848 (TAGP…PSPT), 12849 to 13004 (SAGP…PSPT), 13005 to 13160 (TAVP…PSPT), 13161 to 13316 (TTGP…PGPT), 13317 to 13472 (ATGP…SGPM), 13473 to 13628 (TASP…PGPS), 13629 to 13784 (AASP…FGPS), and 13785 to 13939 (AASH…RYMA). A 12 X approximate tandem repeats region spans residues 12067–13939 (AATVPFMVPF…FTINNLRYMA (1873 aa)). In terms of domain architecture, SEA 1 spans 12072 to 12193 (FMVPFTLNFT…NSLYVNGFTH (122 aa)). 3 N-linked (GlcNAc...) asparagine glycosylation sites follow: Asn-12079, Asn-12100, and Asn-12116. Cysteines 12126 and 12146 form a disulfide. Asn-12168 is a glycosylation site (N-linked (GlcNAc...) asparagine). Residues 12196-12226 (SMPTTSTPGTSTVDVGTSGTPSSSPSPTTAG) form a disordered region. The SEA 2 domain occupies 12228–12349 (LLMPFTLNFT…NSLYVNGFTH (122 aa)). N-linked (GlcNAc...) asparagine glycans are attached at residues Asn-12235 and Asn-12272. Cys-12282 and Cys-12302 are joined by a disulfide. A disordered region spans residues 12353–12376 (VSTTSTPGTSTVDLRTSGTPSSLS). SEA domains follow at residues 12386–12507 (LLVP…GFTH), 12542–12663 (LLVL…GFTH), and 12697–12818 (LLVP…GFTH). N-linked (GlcNAc...) asparagine glycans are attached at residues Asn-12393, Asn-12414, and Asn-12430. Residues Cys-12440 and Cys-12460 are joined by a disulfide bond. N-linked (GlcNAc...) asparagine glycans are attached at residues Asn-12549, Asn-12570, and Asn-12586. Cysteines 12596 and 12616 form a disulfide. N-linked (GlcNAc...) asparagine glycans are attached at residues Asn-12704, Asn-12725, and Asn-12741. Cysteines 12751 and 12771 form a disulfide. The span at 12819–12834 (QTSAPNTSTPGTSTVD) shows a compositional bias: polar residues. Positions 12819–12849 (QTSAPNTSTPGTSTVDLGTSGTPSSLPSPTS) are disordered. An N-linked (GlcNAc...) asparagine glycan is attached at Asn-12824. Residues 12835-12849 (LGTSGTPSSLPSPTS) are compositionally biased toward low complexity. One can recognise an SEA 6 domain in the interval 12853–12974 (LLVPFTLNFT…NSLYVNGFTH (122 aa)). Residues Asn-12860, Asn-12881, and Asn-12897 are each glycosylated (N-linked (GlcNAc...) asparagine). Residues Cys-12907 and Cys-12927 are joined by a disulfide bond. Positions 12978-12990 (VAPTSTPGTSTVD) are enriched in polar residues. Positions 12978–13003 (VAPTSTPGTSTVDLGTSGTPSSLPSP) are disordered. Low complexity predominate over residues 12991-13003 (LGTSGTPSSLPSP). SEA domains lie at 13009-13130 (LLVP…GFTH) and 13165-13286 (LLVP…GFTQ). N-linked (GlcNAc...) asparagine glycans are attached at residues Asn-13016, Asn-13037, and Asn-13053. Cys-13063 and Cys-13083 form a disulfide bridge. Asn-13172 and Asn-13193 each carry an N-linked (GlcNAc...) asparagine glycan. Cys-13219 and Cys-13239 are joined by a disulfide. Positions 13291-13313 (PTTSTPGTFTVQPETSETPSSLP) are enriched in polar residues. A disordered region spans residues 13291 to 13317 (PTTSTPGTFTVQPETSETPSSLPGPTA). SEA domains are found at residues 13321 to 13442 (VLLP…GFTH) and 13477 to 13598 (LLVL…GFTQ). 3 N-linked (GlcNAc...) asparagine glycosylation sites follow: Asn-13328, Asn-13349, and Asn-13365. An intrachain disulfide couples Cys-13375 to Cys-13395. 3 N-linked (GlcNAc...) asparagine glycosylation sites follow: Asn-13484, Asn-13505, and Asn-13521. The cysteines at positions 13531 and 13551 are disulfide-linked. A compositionally biased stretch (polar residues) spans 13603 to 13621 (PTTSIPGTPTVDLGTSGTP). Residues 13603 to 13625 (PTTSIPGTPTVDLGTSGTPVSKP) are disordered. SEA domains are found at residues 13633–13754 (LLVL…GFTH), 13789–13909 (LLIL…GFTH), 13922–14043 (SEEP…GYNE), and 14073–14193 (HLKT…GYAP). Residues Asn-13640 and Asn-13661 are each glycosylated (N-linked (GlcNAc...) asparagine). Cys-13687 and Cys-13707 are disulfide-bonded. N-linked (GlcNAc...) asparagine glycosylation is found at Asn-13733, Asn-13744, Asn-13796, Asn-13816, Asn-13832, Asn-13929, and Asn-13950. Cys-13976 and Cys-13996 are joined by a disulfide. Asn-14080 and Asn-14100 each carry an N-linked (GlcNAc...) asparagine glycan. An intrachain disulfide couples Cys-14126 to Cys-14146. N-linked (GlcNAc...) asparagine glycosylation is found at Asn-14195, Asn-14212, Asn-14254, Asn-14287, Asn-14326, and Asn-14363. 2 consecutive SEA domains span residues 14198–14309 (IRGE…EMES) and 14319–14438 (STQH…GYSP). The cysteines at positions 14373 and 14393 are disulfide-linked. Asn-14417 and Asn-14423 each carry an N-linked (GlcNAc...) asparagine glycan. The chain crosses the membrane as a helical span at residues 14452–14472 (FWAVILIGLAGLLGVITCLIC). Residues 14473–14507 (GVLVTTRRRKKEGEYNVQQQCPGYYQSHLDLEDLQ) lie on the Cytoplasmic side of the membrane.

In terms of assembly, binds to MSLN. Binding to MSLN mediates heterotypic cell adhesion. This may contribute to the metastasis of ovarian cancer to the peritoneum by initiating cell attachment to the mesothelial epithelium via binding to MSLN. Post-translationally, heavily O-glycosylated; expresses both type 1 and type 2 core glycans. Heavily N-glycosylated; expresses primarily high mannose and complex bisecting type N-linked glycans. In terms of processing, may be phosphorylated. Phosphorylation of the intracellular C-terminal domain may induce proteolytic cleavage and the liberation of the extracellular domain into the extracellular space. Post-translationally, may contain numerous disulfide bridges. Association of several molecules of the secreted form may occur through interchain disulfide bridges providing an extraordinarily large gel-like matrix in the extracellular space or in the lumen of secretory ducts. In terms of tissue distribution, expressed in corneal and conjunctival epithelia (at protein level). Overexpressed in ovarian carcinomas and ovarian low malignant potential (LMP) tumors as compared to the expression in normal ovarian tissue and ovarian adenomas.

It localises to the cell membrane. The protein resides in the secreted. It is found in the extracellular space. Its function is as follows. Thought to provide a protective, lubricating barrier against particles and infectious agents at mucosal surfaces. The chain is Mucin-16 from Homo sapiens (Human).